The primary structure comprises 566 residues: MFAQPFDHAFNDLFSQYVDMDSSMVDGNKDVSIPSDFDQIFSLDSLSSDCGDHSPPVPTKPTHQSPQPWATDLWSLPQDAASSASQCSFTFQDTVHPSAVSDLSFHLEAPPTSHPVPAVTCKASSRSPSTPPATPHHKSTKSALVTPKSIRRHRDSHERKLLRKQSFSPSLMRPSQLQAGRMMYPEAWAQRFQNFSLHSSGEHLPLSPPPSDILVQHENTPADNVVTHMNHSTEGLSRNPAEMPSHYETGIFNQSPAISMPSPSAKLLAQQQQHNYLSQSNNSTMATSSPPSGDDIFSSPHSSDPQSLSSWHSDSLGGSALPFTPELQAHDGQAWWPSMPSRVPRQPSYQHVVSSPAPQRSIQSNNQHDLMQGGLMIQFDSSFDGSTSADPSFSSVVTSAPMPQENQNMYSHIPVTPQKYMNLSAYATPPVQHTSRSPSLSPRGRGSPTQGSPLRNEASTKTSPHRRGYHGRKLSSQSMNTPKPVKGPNSSSPGSGSNKSLTVSFVNFTPNDSKKILTGVAPSGSSKTKARREQEARDRRRKLSEAAINAVRKAGGDVEALEAVLC.

Disordered stretches follow at residues 116–174 (VPAV…LMRP), 232–316 (STEG…SDSL), 334–364 (AWWPSMPSRVPRQPSYQHVVSSPAPQRSIQS), 381–400 (SSFDGSTSADPSFSSVVTSA), and 429–542 (PPVQ…RRRK). Polar residues-rich tracts occupy residues 165 to 174 (QSFSPSLMRP) and 269 to 291 (AQQQQHNYLSQSNNSTMATSSPP). Over residues 298–316 (SSPHSSDPQSLSSWHSDSL) the composition is skewed to low complexity. 2 stretches are compositionally biased toward polar residues: residues 347–364 (PSYQHVVSSPAPQRSIQS) and 381–398 (SSFDGSTSADPSFSSVVT). Residues 435–448 (SRSPSLSPRGRGSP) are compositionally biased toward low complexity. The span at 449 to 462 (TQGSPLRNEASTKT) shows a compositional bias: polar residues. The segment covering 463-473 (SPHRRGYHGRK) has biased composition (basic residues). A compositionally biased stretch (low complexity) spans 482 to 500 (PKPVKGPNSSSPGSGSNKS). Residues 501–511 (LTVSFVNFTPN) are compositionally biased toward polar residues.

This sequence belongs to the wetA family.

Functionally, brlA, abaA and wetA are pivotal regulators of conidiophore development and conidium maturation. They act individually and together to regulate their own expression and that of numerous other sporulation-specific genes. Plays an essential role in the completion of conidial maturation and is essential for trehalose biogenesis in conidia. Negatively regulates expression of the melanin biosynthetic gene cluster. Also plays an a role in the early phase of fungal growth including proper hyphal branching. This chain is Developmental regulatory protein wetA, found in Aspergillus fumigatus (strain ATCC MYA-4609 / CBS 101355 / FGSC A1100 / Af293) (Neosartorya fumigata).